A 611-amino-acid chain; its full sequence is Protein KINASE OF THE OUTER CHLOROPLAST MEMBRANE 1 (611 aa).

Residues 1–555 lie on the Cytoplasmic side of the membrane; that stretch reads MASKIIAGKP…LEDFHWAVRP (555 aa). One can recognise a Protein kinase domain in the interval 39-306; that stretch reads LKLRHRIGRG…TDILLVLKSL (268 aa). Residues 45–53 and Lys74 contribute to the ATP site; that span reads IGRGPFGDV. A helical transmembrane segment spans residues 556–572; it reads LLIAMGLLTAMKLGICV. Residues 573–611 are Chloroplast intermembrane-facing; the sequence is RKKIGRSKDGKQRDGSTGQGDCKIPDGKGSDKSKWLVFF. A disordered region spans residues 579–606; that stretch reads SKDGKQRDGSTGQGDCKIPDGKGSDKSK. Basic and acidic residues predominate over residues 595–606; sequence KIPDGKGSDKSK.

It belongs to the protein kinase superfamily. Ser/Thr protein kinase family. In terms of assembly, associates with the TOC complex containing, at least, translocons at the chloroplast envelope (e.g. TOCs and TICs such as TOC159, TOC75, TOC33 and TIC56).

The protein resides in the plastid. Its subcellular location is the chloroplast outer membrane. It carries out the reaction L-seryl-[protein] + ATP = O-phospho-L-seryl-[protein] + ADP + H(+). It catalyses the reaction L-threonyl-[protein] + ATP = O-phospho-L-threonyl-[protein] + ADP + H(+). Serine/threonine protein kinase acting as a regulatory component of the plastid protein import machinery by phosphorylating import receptors (e.g. the A-domain of TOC159, TOC120 and TOC132). Supports preprotein import and contributes to efficient chloroplast biogenesis, thus being required for survival during de-etiolation. The protein is Protein KINASE OF THE OUTER CHLOROPLAST MEMBRANE 1 of Arabidopsis thaliana (Mouse-ear cress).